Here is a 510-residue protein sequence, read N- to C-terminus: D-alanine--D-alanyl carrier protein ligase (510 aa).

157 to 158 provides a ligand contact to ATP; it reads TS. D-alanine is bound at residue Asp202. Position 297 to 302 (297 to 302) interacts with ATP; it reads NTYGPT. Val306 lines the D-alanine pocket. ATP-binding residues include Asp389 and Lys498. Lys498 contributes to the D-alanine binding site.

The protein belongs to the ATP-dependent AMP-binding enzyme family. DltA subfamily.

It localises to the cytoplasm. It carries out the reaction holo-[D-alanyl-carrier protein] + D-alanine + ATP = D-alanyl-[D-alanyl-carrier protein] + AMP + diphosphate. The protein operates within cell wall biogenesis; lipoteichoic acid biosynthesis. In terms of biological role, catalyzes the first step in the D-alanylation of lipoteichoic acid (LTA), the activation of D-alanine and its transfer onto the D-alanyl carrier protein (Dcp) DltC. In an ATP-dependent two-step reaction, forms a high energy D-alanyl-AMP intermediate, followed by transfer of the D-alanyl residue as a thiol ester to the phosphopantheinyl prosthetic group of the Dcp. D-alanylation of LTA plays an important role in modulating the properties of the cell wall in Gram-positive bacteria, influencing the net charge of the cell wall. In Listeria monocytogenes serovar 1/2a (strain ATCC BAA-679 / EGD-e), this protein is D-alanine--D-alanyl carrier protein ligase.